A 30-amino-acid polypeptide reads, in one-letter code: Cyclotide cter-H (30 aa).

The cyclopeptide (Gly-Asp) cross-link spans 1-30 (GLPCGESCVFIPCITTVVGCSCKNKVCYND). Disulfide bonds link Cys-4–Cys-20, Cys-8–Cys-22, and Cys-13–Cys-27.

In terms of processing, contains 3 disulfide bonds. This is a cyclic peptide.

In terms of biological role, probably participates in a plant defense mechanism. This chain is Cyclotide cter-H, found in Clitoria ternatea (Butterfly pea).